A 214-amino-acid polypeptide reads, in one-letter code: S-crystallin 1 (214 aa).

In terms of domain architecture, GST N-terminal spans proline 2 to glycine 79. In terms of domain architecture, GST C-terminal spans asparagine 81–phenylalanine 214.

The protein belongs to the GST superfamily. In terms of tissue distribution, lens.

S-crystallins are structural components of squids and octopi eye lens. Contains relatively little GST activity (1/1000 of that of mammalian GST enzyme). This chain is S-crystallin 1 (OCTS1), found in Octopus vulgaris (Common octopus).